We begin with the raw amino-acid sequence, 399 residues long: tRNA-specific 2-thiouridylase MnmA (399 aa).

Residues 18 to 25 (AMSGGVDS) and Leu-44 each bind ATP. Cys-112 functions as the Nucleophile in the catalytic mechanism. Cys-112 and Cys-213 form a disulfide bridge. Residue Gly-136 participates in ATP binding. The interaction with tRNA stretch occupies residues 163–165 (RDQ). Cys-213 functions as the Cysteine persulfide intermediate in the catalytic mechanism.

It belongs to the MnmA/TRMU family.

It is found in the cytoplasm. The enzyme catalyses S-sulfanyl-L-cysteinyl-[protein] + uridine(34) in tRNA + AH2 + ATP = 2-thiouridine(34) in tRNA + L-cysteinyl-[protein] + A + AMP + diphosphate + H(+). Functionally, catalyzes the 2-thiolation of uridine at the wobble position (U34) of tRNA, leading to the formation of s(2)U34. This Rhizobium rhizogenes (strain K84 / ATCC BAA-868) (Agrobacterium radiobacter) protein is tRNA-specific 2-thiouridylase MnmA.